The sequence spans 167 residues: Large ribosomal subunit protein uL10 (167 aa).

Belongs to the universal ribosomal protein uL10 family. In terms of assembly, part of the ribosomal stalk of the 50S ribosomal subunit. The N-terminus interacts with L11 and the large rRNA to form the base of the stalk. The C-terminus forms an elongated spine to which L12 dimers bind in a sequential fashion forming a multimeric L10(L12)X complex.

In terms of biological role, forms part of the ribosomal stalk, playing a central role in the interaction of the ribosome with GTP-bound translation factors. In Dichelobacter nodosus (strain VCS1703A), this protein is Large ribosomal subunit protein uL10.